The chain runs to 310 residues: Ribosomal RNA small subunit methyltransferase H (310 aa).

S-adenosyl-L-methionine is bound by residues 47–49, Asp-66, Phe-93, Asp-108, and Gln-115; that span reads GGH.

Belongs to the methyltransferase superfamily. RsmH family.

Its subcellular location is the cytoplasm. The enzyme catalyses cytidine(1402) in 16S rRNA + S-adenosyl-L-methionine = N(4)-methylcytidine(1402) in 16S rRNA + S-adenosyl-L-homocysteine + H(+). Its function is as follows. Specifically methylates the N4 position of cytidine in position 1402 (C1402) of 16S rRNA. The polypeptide is Ribosomal RNA small subunit methyltransferase H (Prochlorococcus marinus (strain MIT 9303)).